The chain runs to 283 residues: Elongation factor Ts (283 aa).

Residues 79-82 (TDFV) form an involved in Mg(2+) ion dislocation from EF-Tu region.

Belongs to the EF-Ts family.

The protein localises to the cytoplasm. Associates with the EF-Tu.GDP complex and induces the exchange of GDP to GTP. It remains bound to the aminoacyl-tRNA.EF-Tu.GTP complex up to the GTP hydrolysis stage on the ribosome. This chain is Elongation factor Ts, found in Shewanella frigidimarina (strain NCIMB 400).